We begin with the raw amino-acid sequence, 198 residues long: Ribose 1,5-bisphosphate phosphokinase PhnN (198 aa).

25–32 (GPSGAGKD) provides a ligand contact to ATP.

The protein belongs to the ribose 1,5-bisphosphokinase family.

The catalysed reaction is alpha-D-ribose 1,5-bisphosphate + ATP = 5-phospho-alpha-D-ribose 1-diphosphate + ADP. Its pathway is metabolic intermediate biosynthesis; 5-phospho-alpha-D-ribose 1-diphosphate biosynthesis; 5-phospho-alpha-D-ribose 1-diphosphate from D-ribose 5-phosphate (route II): step 3/3. Functionally, catalyzes the phosphorylation of ribose 1,5-bisphosphate to 5-phospho-D-ribosyl alpha-1-diphosphate (PRPP). The protein is Ribose 1,5-bisphosphate phosphokinase PhnN of Bradyrhizobium diazoefficiens (strain JCM 10833 / BCRC 13528 / IAM 13628 / NBRC 14792 / USDA 110).